A 118-amino-acid chain; its full sequence is Non-specific lipid-transfer protein D (118 aa).

Residues 1–25 form the signal peptide; the sequence is MAGLMKLACLIFACMIVAGPITSNA. Cystine bridges form between Cys29–Cys77, Cys39–Cys54, Cys55–Cys100, and Cys75–Cys114.

Belongs to the plant LTP family.

In terms of biological role, plant non-specific lipid-transfer proteins transfer phospholipids as well as galactolipids across membranes. May play a role in wax or cutin deposition in the cell walls of expanding epidermal cells and certain secretory tissues. The protein is Non-specific lipid-transfer protein D (WAX9D) of Brassica oleracea var. italica (Broccoli).